The primary structure comprises 193 residues: Phosphoheptose isomerase (193 aa).

Positions 37–193 (LADSFKAGGK…QLIEKEMVKA (157 aa)) constitute an SIS domain. 52-54 (NGG) is a substrate binding site. His-61 and Glu-65 together coordinate Zn(2+). Residues Glu-65, 93–94 (ND), 119–121 (STS), Ser-124, and Gln-172 contribute to the substrate site. Positions 172 and 180 each coordinate Zn(2+).

This sequence belongs to the SIS family. GmhA subfamily. In terms of assembly, homotetramer. It depends on Zn(2+) as a cofactor.

The protein localises to the cytoplasm. It catalyses the reaction 2 D-sedoheptulose 7-phosphate = D-glycero-alpha-D-manno-heptose 7-phosphate + D-glycero-beta-D-manno-heptose 7-phosphate. The protein operates within carbohydrate biosynthesis; D-glycero-D-manno-heptose 7-phosphate biosynthesis; D-glycero-alpha-D-manno-heptose 7-phosphate and D-glycero-beta-D-manno-heptose 7-phosphate from sedoheptulose 7-phosphate: step 1/1. In terms of biological role, catalyzes the isomerization of sedoheptulose 7-phosphate in D-glycero-D-manno-heptose 7-phosphate. This chain is Phosphoheptose isomerase, found in Yersinia pseudotuberculosis serotype O:1b (strain IP 31758).